Here is a 379-residue protein sequence, read N- to C-terminus: tRNA-specific 2-thiouridylase MnmA (379 aa).

ATP-binding positions include 9-16 (AMSGGVDS) and Met-35. The interaction with target base in tRNA stretch occupies residues 94 to 96 (NPD). Cys-99 (nucleophile) is an active-site residue. Cysteines 99 and 195 form a disulfide. Gly-123 is an ATP binding site. The tract at residues 145 to 147 (KDQ) is interaction with tRNA. Residue Cys-195 is the Cysteine persulfide intermediate of the active site. Positions 307–308 (RY) are interaction with tRNA.

This sequence belongs to the MnmA/TRMU family.

It localises to the cytoplasm. The enzyme catalyses S-sulfanyl-L-cysteinyl-[protein] + uridine(34) in tRNA + AH2 + ATP = 2-thiouridine(34) in tRNA + L-cysteinyl-[protein] + A + AMP + diphosphate + H(+). Functionally, catalyzes the 2-thiolation of uridine at the wobble position (U34) of tRNA, leading to the formation of s(2)U34. In Xylella fastidiosa (strain M23), this protein is tRNA-specific 2-thiouridylase MnmA.